Consider the following 295-residue polypeptide: Bifunctional protein FolD 1 (295 aa).

Residues 165–167, Ile-190, and Ile-231 each bind NADP(+); that span reads GKS.

The protein belongs to the tetrahydrofolate dehydrogenase/cyclohydrolase family. In terms of assembly, homodimer.

The enzyme catalyses (6R)-5,10-methylene-5,6,7,8-tetrahydrofolate + NADP(+) = (6R)-5,10-methenyltetrahydrofolate + NADPH. It catalyses the reaction (6R)-5,10-methenyltetrahydrofolate + H2O = (6R)-10-formyltetrahydrofolate + H(+). It participates in one-carbon metabolism; tetrahydrofolate interconversion. In terms of biological role, catalyzes the oxidation of 5,10-methylenetetrahydrofolate to 5,10-methenyltetrahydrofolate and then the hydrolysis of 5,10-methenyltetrahydrofolate to 10-formyltetrahydrofolate. In Rhizorhabdus wittichii (strain DSM 6014 / CCUG 31198 / JCM 15750 / NBRC 105917 / EY 4224 / RW1) (Sphingomonas wittichii), this protein is Bifunctional protein FolD 1.